Consider the following 520-residue polypeptide: Eukaryotic translation initiation factor 3 subunit L (520 aa).

In terms of domain architecture, PCI spans 278–478 (FATYYYVGIC…ELDIALENDL (201 aa)).

This sequence belongs to the eIF-3 subunit L family. In terms of assembly, component of the eukaryotic translation initiation factor 3 (eIF-3) complex.

It localises to the cytoplasm. In terms of biological role, component of the eukaryotic translation initiation factor 3 (eIF-3) complex, which is involved in protein synthesis of a specialized repertoire of mRNAs and, together with other initiation factors, stimulates binding of mRNA and methionyl-tRNAi to the 40S ribosome. The eIF-3 complex specifically targets and initiates translation of a subset of mRNAs involved in cell proliferation. The sequence is that of Eukaryotic translation initiation factor 3 subunit L from Yarrowia lipolytica (strain CLIB 122 / E 150) (Yeast).